We begin with the raw amino-acid sequence, 471 residues long: UDP-N-acetylmuramate--L-alanine ligase (471 aa).

Residue 114–120 participates in ATP binding; sequence GTHGKTT.

The protein belongs to the MurCDEF family.

The protein localises to the cytoplasm. The catalysed reaction is UDP-N-acetyl-alpha-D-muramate + L-alanine + ATP = UDP-N-acetyl-alpha-D-muramoyl-L-alanine + ADP + phosphate + H(+). It participates in cell wall biogenesis; peptidoglycan biosynthesis. Functionally, cell wall formation. This is UDP-N-acetylmuramate--L-alanine ligase from Rhizobium johnstonii (strain DSM 114642 / LMG 32736 / 3841) (Rhizobium leguminosarum bv. viciae).